The sequence spans 445 residues: Probable protein phosphatase 2C 14 (445 aa).

In terms of domain architecture, PPM-type phosphatase spans 120–440 (GFGVVSRNGK…DDITVVIIDL (321 aa)). The Mn(2+) site is built by Asp-156, Gly-157, and Asp-318. The tract at residues 384–404 (NSENESPSLNREIGSSPSKSP) is disordered. The segment covering 390 to 404 (PSLNREIGSSPSKSP) has biased composition (polar residues). Asp-431 contacts Mn(2+).

This sequence belongs to the PP2C family. Requires Mg(2+) as cofactor. Mn(2+) is required as a cofactor.

It catalyses the reaction O-phospho-L-seryl-[protein] + H2O = L-seryl-[protein] + phosphate. The enzyme catalyses O-phospho-L-threonyl-[protein] + H2O = L-threonyl-[protein] + phosphate. This Arabidopsis thaliana (Mouse-ear cress) protein is Probable protein phosphatase 2C 14.